A 350-amino-acid chain; its full sequence is Serine/threonine-protein kinase SRK2F (350 aa).

The 257-residue stretch at 4-260 folds into the Protein kinase domain; the sequence is YDILRDLGSG…VPEIEKHPWF (257 aa). ATP-binding positions include 10 to 18 and lysine 33; that span reads LGSGNFGVA. Aspartate 123 (proton acceptor) is an active-site residue. Residues 270-303 adopt a coiled-coil conformation; sequence EEEKCDNGVEEEEEEEEKCRQSVEEIVKIIEEAR.

Belongs to the protein kinase superfamily. Ser/Thr protein kinase family. As to expression, expressed in seedlings.

The catalysed reaction is L-seryl-[protein] + ATP = O-phospho-L-seryl-[protein] + ADP + H(+). It carries out the reaction L-threonyl-[protein] + ATP = O-phospho-L-threonyl-[protein] + ADP + H(+). The sequence is that of Serine/threonine-protein kinase SRK2F (SRK2F) from Arabidopsis thaliana (Mouse-ear cress).